The following is a 570-amino-acid chain: Urease subunit alpha (570 aa).

Residues 131–570 (GGMDSHIHFI…LPMAQRYFLF (440 aa)) form the Urease domain. Positions 136, 138, and 219 each coordinate Ni(2+). At lysine 219 the chain carries N6-carboxylysine. Histidine 221 provides a ligand contact to substrate. Residues histidine 248 and histidine 274 each contribute to the Ni(2+) site. The Proton donor role is filled by histidine 322. A Ni(2+)-binding site is contributed by aspartate 362.

The protein belongs to the metallo-dependent hydrolases superfamily. Urease alpha subunit family. As to quaternary structure, heterotrimer of UreA (gamma), UreB (beta) and UreC (alpha) subunits. Three heterotrimers associate to form the active enzyme. Ni cation is required as a cofactor. Post-translationally, carboxylation allows a single lysine to coordinate two nickel ions.

It is found in the cytoplasm. The catalysed reaction is urea + 2 H2O + H(+) = hydrogencarbonate + 2 NH4(+). The protein operates within nitrogen metabolism; urea degradation; CO(2) and NH(3) from urea (urease route): step 1/1. The protein is Urease subunit alpha of Rhizobium johnstonii (strain DSM 114642 / LMG 32736 / 3841) (Rhizobium leguminosarum bv. viciae).